Consider the following 174-residue polypeptide: Beta-lactoglobulin (174 aa).

Positions methionine 1 to alanine 18 are cleaved as a signal peptide. Cystine bridges form between cysteine 79/cysteine 172 and cysteine 122/cysteine 134.

It belongs to the calycin superfamily. Lipocalin family. Monomer.

It is found in the secreted. In terms of biological role, lactoglobulin is the primary component of whey, it binds retinol and is probably involved in the transport of that molecule. The sequence is that of Beta-lactoglobulin (LGB) from Trichosurus vulpecula (Brush-tailed possum).